Here is a 575-residue protein sequence, read N- to C-terminus: Phosphoenolpyruvate-protein phosphotransferase (575 aa).

The active-site Tele-phosphohistidine intermediate is H191. R298 and R334 together coordinate phosphoenolpyruvate. Mg(2+)-binding residues include E435 and D459. Phosphoenolpyruvate is bound by residues 458–459 (ND) and R469. C506 serves as the catalytic Proton donor.

Belongs to the PEP-utilizing enzyme family. In terms of assembly, homodimer. It depends on Mg(2+) as a cofactor.

It is found in the cytoplasm. It carries out the reaction L-histidyl-[protein] + phosphoenolpyruvate = N(pros)-phospho-L-histidyl-[protein] + pyruvate. In terms of biological role, general (non sugar-specific) component of the phosphoenolpyruvate-dependent sugar phosphotransferase system (sugar PTS). This major carbohydrate active-transport system catalyzes the phosphorylation of incoming sugar substrates concomitantly with their translocation across the cell membrane. Enzyme I transfers the phosphoryl group from phosphoenolpyruvate (PEP) to the phosphoryl carrier protein (HPr). The polypeptide is Phosphoenolpyruvate-protein phosphotransferase (ptsI) (Enterococcus faecalis (strain ATCC 700802 / V583)).